The chain runs to 313 residues: Small glutamine-rich tetratricopeptide repeat-containing protein alpha (313 aa).

A disordered region spans residues 69–97; sequence KELPPDLRSPQETPPSEEDSAEAERLKTE. Residue Ser77 is modified to Phosphoserine. Thr81 carries the post-translational modification Phosphothreonine. At Ser84 the chain carries Phosphoserine. TPR repeat units follow at residues 91-124, 125-158, and 159-192; these read AERL…NPAN, AVYF…DPSY, and SKAY…DPDN. Lys137 carries the N6-acetyllysine modification. Ser301 bears the Phosphoserine mark. Thr303 carries the phosphothreonine modification. A Phosphoserine modification is found at Ser305.

It belongs to the SGT family. As to quaternary structure, homodimer. Homooligomer. Interacts with DNAJC5 and DNAJC5B. Interacts (via TPR repeats) with HSP90AA1. Interacts (via Gln-rich region) with SLC2A1. Interacts with HSP90AB1. Interacts (via TPR repeats) with HSPA8/Hsc70; the interaction is direct. Interacts with BAG6 (via ubiquitin-like domain); interaction prevents interaction between BAG6 and RNF126. Forms a multiprotein complex, at least composed of DNAJB12, DNAJB14, HSPA8/Hsc70 and SGTA; interaction with DNAJB14 and HSPA8/Hsc70 is direct.

The protein localises to the cytoplasm. It is found in the nucleus. In terms of biological role, co-chaperone that binds misfolded and hydrophobic patches-containing client proteins in the cytosol. Mediates their targeting to the endoplasmic reticulum but also regulates their sorting to the proteasome when targeting fails. Functions in tail-anchored/type II transmembrane proteins membrane insertion constituting with ASNA1 and the BAG6 complex a targeting module. Functions upstream of the BAG6 complex and ASNA1, binding more rapidly the transmembrane domain of newly synthesized proteins. It is also involved in the regulation of the endoplasmic reticulum-associated misfolded protein catabolic process via its interaction with BAG6: collaborates with the BAG6 complex to maintain hydrophobic substrates in non-ubiquitinated states. Competes with RNF126 for interaction with BAG6, preventing the ubiquitination of client proteins associated with the BAG6 complex. Binds directly to HSC70 and HSP70 and regulates their ATPase activity. In Bos taurus (Bovine), this protein is Small glutamine-rich tetratricopeptide repeat-containing protein alpha (SGTA).